Here is a 612-residue protein sequence, read N- to C-terminus: Glutamine--fructose-6-phosphate aminotransferase [isomerizing] (612 aa).

The active-site Nucleophile; for GATase activity is Cys2. In terms of domain architecture, Glutamine amidotransferase type-2 spans 2–220 (CGIVGAIRAH…DGDIALLASD (219 aa)). SIS domains lie at 288 to 428 (AKSV…VRGL) and 461 to 602 (WAQQ…VDKP). Lys607 (for Fru-6P isomerization activity) is an active-site residue.

Homodimer.

It is found in the cytoplasm. The catalysed reaction is D-fructose 6-phosphate + L-glutamine = D-glucosamine 6-phosphate + L-glutamate. Functionally, catalyzes the first step in hexosamine metabolism, converting fructose-6P into glucosamine-6P using glutamine as a nitrogen source. This Neisseria meningitidis serogroup B (strain ATCC BAA-335 / MC58) protein is Glutamine--fructose-6-phosphate aminotransferase [isomerizing].